A 175-amino-acid chain; its full sequence is Adenine phosphoribosyltransferase (175 aa).

Belongs to the purine/pyrimidine phosphoribosyltransferase family. Homodimer.

Its subcellular location is the cytoplasm. It catalyses the reaction AMP + diphosphate = 5-phospho-alpha-D-ribose 1-diphosphate + adenine. It participates in purine metabolism; AMP biosynthesis via salvage pathway; AMP from adenine: step 1/1. Functionally, catalyzes a salvage reaction resulting in the formation of AMP, that is energically less costly than de novo synthesis. The protein is Adenine phosphoribosyltransferase of Francisella philomiragia subsp. philomiragia (strain ATCC 25017 / CCUG 19701 / FSC 153 / O#319-036).